A 294-amino-acid polypeptide reads, in one-letter code: RAB7A-interacting MON1-CCZ1 complex subunit 1 (294 aa).

Position 2 is an N-acetylalanine (alanine 2).

This sequence belongs to the RIMOC1 family. In terms of assembly, interacts with the MON1A-CCZ1B complex. Interacts with GDP-bound RAB7A and promotes its interaction with the MON1A-CCZ1B complex.

It is found in the cytoplasm. Its subcellular location is the cytosol. Its function is as follows. Plays an important role in the removal of damaged mitochondria via mitophagy by controlling the stability and localization of RAB7A. Required for the recruitment of RAB7A and ATG9A vesicles to damaged mitochondria and promotes the stability of RAB7A by inhibiting its proteasomal degradation during mitophagy. In Homo sapiens (Human), this protein is RAB7A-interacting MON1-CCZ1 complex subunit 1.